The primary structure comprises 784 residues: LPS-assembly protein LptD (784 aa).

The first 24 residues, 1-24, serve as a signal peptide directing secretion; that stretch reads MKKRIPTLLATMIATALYSQQGLA. 2 cysteine pairs are disulfide-bonded: Cys-31–Cys-724 and Cys-173–Cys-725.

This sequence belongs to the LptD family. Component of the lipopolysaccharide transport and assembly complex. Interacts with LptE and LptA. Contains two intramolecular disulfide bonds.

The protein localises to the cell outer membrane. Functionally, together with LptE, is involved in the assembly of lipopolysaccharide (LPS) at the surface of the outer membrane. This chain is LPS-assembly protein LptD, found in Escherichia coli O1:K1 / APEC.